Consider the following 865-residue polypeptide: Protein translocase subunit SecA (865 aa).

Residues Q93, 111-115 (GEGKT), and D501 each bind ATP. Positions 841, 843, 852, and 853 each coordinate Zn(2+).

Belongs to the SecA family. Monomer and homodimer. Part of the essential Sec protein translocation apparatus which comprises SecA, SecYEG and auxiliary proteins SecDF-YajC and YidC. The cofactor is Zn(2+).

The protein localises to the cell inner membrane. It localises to the cytoplasm. It catalyses the reaction ATP + H2O + cellular proteinSide 1 = ADP + phosphate + cellular proteinSide 2.. In terms of biological role, part of the Sec protein translocase complex. Interacts with the SecYEG preprotein conducting channel. Has a central role in coupling the hydrolysis of ATP to the transfer of proteins into and across the cell membrane, serving as an ATP-driven molecular motor driving the stepwise translocation of polypeptide chains across the membrane. This Helicobacter pylori (strain P12) protein is Protein translocase subunit SecA.